The chain runs to 395 residues: Forkhead box protein I3 (395 aa).

The fork-head DNA-binding region spans 131 to 225 (RPPYSYSALI…DNGNFRRKRK (95 aa)). Disordered regions lie at residues 216 to 288 (DNGN…GIIS) and 322 to 370 (RNFS…SSGS). Residues 221 to 227 (RRKRKRR) carry the Nuclear localization signal motif. Residues 234–245 (ATTAAASSLGGL) are compositionally biased toward low complexity. Residues 325-335 (SAGQLSGGTFT) show a composition bias toward polar residues. Residues 336–349 (PSSSSSQEVPSPEQ) show a composition bias toward low complexity.

In terms of tissue distribution, initially expressed in the pre-placodal ectoderm surrounding the neural plate, which will give rise to all craniofacial sensory organs. Expression then becomes restricted to a region immediately anterior to the first pair of somites that will give rise to the otic and epibranchial placodes, before becoming down-regulated from this region and restricted to the ectoderm and endoderm of the pharyngeal arches.

It is found in the nucleus. Its function is as follows. Transcription factor required for pharyngeal arch development, which is involved in otic placode development. This chain is Forkhead box protein I3, found in Gallus gallus (Chicken).